Here is a 492-residue protein sequence, read N- to C-terminus: Mitochondrial distribution and morphology protein 12 (492 aa).

The SMP-LTD domain occupies 1-492 (MSIDLNWETV…VYPSFWTFLV (492 aa)). Disordered regions lie at residues 68-158 (DFYE…STPG), 199-301 (LEGH…GHPR), and 379-434 (AVGG…GSGN). The segment covering 78–90 (VASDDSEGEEDAV) has biased composition (acidic residues). Positions 130-139 (SPGGPGGPGM) are enriched in gly residues. The span at 246–257 (LNPNSLAPPSSS) shows a compositional bias: low complexity. Polar residues predominate over residues 270-285 (TTPAPGSATALSGSNE). The span at 387-400 (GLSSPGEGPSQAQG) shows a compositional bias: low complexity. Over residues 401–415 (QGQGQGQGQGQGQTP) the composition is skewed to gly residues. The span at 416 to 428 (GAGQQKQQKKQAG) shows a compositional bias: low complexity.

Belongs to the MDM12 family. As to quaternary structure, component of the ER-mitochondria encounter structure (ERMES) or MDM complex, composed of MMM1, MDM10, MDM12 and MDM34. An MMM1 homodimer associates with one molecule of MDM12 on each side in a pairwise head-to-tail manner, and the SMP-LTD domains of MMM1 and MDM12 generate a continuous hydrophobic tunnel for phospholipid trafficking.

The protein localises to the mitochondrion outer membrane. It localises to the endoplasmic reticulum membrane. Component of the ERMES/MDM complex, which serves as a molecular tether to connect the endoplasmic reticulum (ER) and mitochondria. Components of this complex are involved in the control of mitochondrial shape and protein biogenesis, and function in nonvesicular lipid trafficking between the ER and mitochondria. MDM12 is required for the interaction of the ER-resident membrane protein MMM1 and the outer mitochondrial membrane-resident beta-barrel protein MDM10. The MDM12-MMM1 subcomplex functions in the major beta-barrel assembly pathway that is responsible for biogenesis of all mitochondrial outer membrane beta-barrel proteins, and acts in a late step after the SAM complex. The MDM10-MDM12-MMM1 subcomplex further acts in the TOM40-specific pathway after the action of the MDM12-MMM1 complex. Essential for establishing and maintaining the structure of mitochondria and maintenance of mtDNA nucleoids. This is Mitochondrial distribution and morphology protein 12 from Chaetomium globosum (strain ATCC 6205 / CBS 148.51 / DSM 1962 / NBRC 6347 / NRRL 1970) (Soil fungus).